Here is a 233-residue protein sequence, read N- to C-terminus: Syntaxin-52 (233 aa).

Topologically, residues 1 to 209 (MASSSDPWMR…NKSMKSGCSC (209 aa)) are cytoplasmic. Residues 137–199 (RQVMREQDEG…RRVQKSLALM (63 aa)) form the t-SNARE coiled-coil homology domain. The chain crosses the membrane as a helical; Anchor for type IV membrane protein span at residues 210 to 230 (MSMLLSVLGIVGLALVIWLLV). Residues 231-233 (KYL) are Vesicular-facing.

It belongs to the syntaxin family. Interacts either with VTI11 and SYP21, or with VTI11 and SYP22 in the prevacuolar compartment, or with VTI12 and SYP61 in the trans-Golgi network to form t-SNARE complexes. In terms of tissue distribution, expressed in root, leaf, stem, flower and silique.

Its subcellular location is the golgi apparatus. It is found in the trans-Golgi network membrane. It localises to the prevacuolar compartment membrane. Vesicle trafficking protein that functions in the secretory pathway. This Arabidopsis thaliana (Mouse-ear cress) protein is Syntaxin-52 (SYP52).